A 765-amino-acid chain; its full sequence is NADPH oxidase 5 (765 aa).

Residues 1 to 77 (MNTSGDPAQT…LFDSDRSGTI (77 aa)) are N-terminal lobe of N-terminal regulatory EF domain. An N-terminal regulatory EF domain region spans residues 1 to 161 (MNTSGDPAQT…SCLRESAISL (161 aa)). Residues 1 to 238 (MNTSGDPAQT…RAYWHNHRSQ (238 aa)) lie on the Cytoplasmic side of the membrane. 2 EF-hand domains span residues 26–56 (RWLR…ALHV) and 57–92 (KESF…LIHG). Residues Asp42, Glu44, Glu49, Asp70, Asp72, Ser74, Thr76, Glu81, and Asp106 each contribute to the Ca(2+) site. The C-terminal lobe of N-terminal regulatory EF domain stretch occupies residues 78–161 (TLQELQEALT…SCLRESAISL (84 aa)). Residues 93–156 (SPMDKLKFLF…RTVLQSCLRE (64 aa)) enclose the EF-hand 3; atypical; contains an insert of 28 residues domain. An S-nitrosocysteine modification is found at Ile107. Ca(2+) is bound by residues Asp108, Ser138, Ser140, Glu145, Asp178, Asp180, Asn182, and Glu189. A disordered region spans residues 122–141 (GAGAGPHWASSPLGTGSGSI). The region spanning 165 to 200 (KLDQLTLALFESADADGNGAITFEELRDELQRFPGV) is the EF-hand 4 domain. A helical membrane pass occupies residues 239–259 (LFCLATYAGLHVLLFGLAASA). Position 246 is an S-nitrosocysteine (Ala246). Residues 260 to 266 (HRDLGAS) lie on the Extracellular side of the membrane. A helical transmembrane segment spans residues 267–289 (VMVAKGCGQCLNFDCSFIAVLML). Over 290–317 (RRCLTWLRATWLAQVLPLDQNIQFHQLM) the chain is Cytoplasmic. Residues 293–440 (LTWLRATWLA…FLEKAIGLAV (148 aa)) enclose the Ferric oxidoreductase domain. The helical transmembrane segment at 318 to 338 (GYVVVGLSLVHTVAHTVNFVL) threads the bilayer. At 339-362 (QAQAEASPFQFWELLLTTRPGIGW) the chain is on the extracellular side. Residues 363 to 383 (VHGSASPTGVALLLLLLLMFI) form a helical membrane-spanning segment. The Cytoplasmic segment spans residues 384 to 394 (CSSSCIRRSGH). The chain crosses the membrane as a helical span at residues 395-417 (FEVFYWTHLSYLLVWLLLIFHGP). 2 C-terminal catalytic dehydrogenase domain regions span residues 398 to 719 (FYWT…GRPD) and 416 to 737 (GPNF…KVQV). Over 418-434 (NFWKWLLVPGILFFLEK) the chain is Extracellular. The helical transmembrane segment at 435 to 455 (AIGLAVSRMAAVCIMEVNLLP) threads the bilayer. An FAD-binding FR-type domain is found at 441-577 (SRMAAVCIME…DGPYGTPTRR (137 aa)). Residues 456–583 (SKVTHLLIKR…PTRRIFASEH (128 aa)) are Cytoplasmic-facing. A Phosphoserine; by CaMK2 modification is found at Asp475. His490 is subject to Phosphothreonine; by PKC/PRKCA. Phosphothreonine; by CaMK2 and PKC/PRKCA is present on Ile494. Pro498 is subject to Phosphoserine; by CaMK2 and PKC/PRKCA. Asp502 carries the post-translational modification Phosphoserine; by CaMK2. Residue Tyr519 is modified to S-nitrosocysteine. The helical transmembrane segment at 584 to 604 (AVLIGAGIGITPFASILQSIM) threads the bilayer. Over 605–765 (YRHQKRKHTC…FGFRFFQENF (161 aa)) the chain is Extracellular. Asp659 is modified (phosphoserine; by CaMK2). Leu694 is modified (S-nitrosocysteine).

As to quaternary structure, homooligomer. FAD is required as a cofactor. The cofactor is Mg(2+). In terms of processing, phosphorylation at Ser-475 by CaMK2 and at Ser-490, Thr-494 and Ser-498 by PKC/PRKCA positively regulates its catalytic activity. S-nitrosylation in response to nitric oxide inhibits its catalytic activity. As to expression, mainly expressed in pachytene spermatocytes of testis and in lymphocyte-rich areas of spleen and lymph nodes. Also detected in ovary, placenta, pancreas, cardiac fibroblasts. Expressed in B-cells and prostate malignant cells. Expressed in spleen. Expressed in endothelial cells, pulmonary artery smooth muscle cells and epithelial colorectal adenocarcinoma cells. In terms of tissue distribution, expressed in microvascular endothelial cells (at protein level). Expressed in testis. Expressed in endothelial cells and pulmonary artery smooth muscle cells. As to expression, expressed in pulmonary artery smooth muscle cells and epithelial colorectal adenocarcinoma cells. Expressed in endothelial cells and pulmonary artery smooth muscle cells. In terms of tissue distribution, expressed in microvascular endothelial cells (at protein level).

It is found in the endoplasmic reticulum. Its subcellular location is the cell membrane. The enzyme catalyses NADPH + 2 O2 = 2 superoxide + NADP(+) + H(+). Activated by calcium which induces conformational changes and interaction between the N-terminal regulatory region and the C-terminal catalytic region. Inhibited by diphenylene iodonium. Functionally, calcium-dependent NADPH oxidase that catalyzes the generation of superoxide from molecular oxygen utilizing NADPH as an electron donor. May play a role in cell growth and apoptosis. Calcium-dependent NADPH oxidase that catalyzes the generation of superoxide from molecular oxygen utilizing NADPH as an electron donor. Involved in endothelial generation of reactive oxygen species (ROS), proliferation and angiogenesis and contributes to endothelial response to thrombin. Regulates redox-dependent processes in lymphocytes and spermatozoa. Its function is as follows. Calcium-dependent NADPH oxidase that catalyzes the generation of superoxide from molecular oxygen utilizing NADPH as an electron donor. In terms of biological role, this isoform lacks calcium-binding domains and was showed to present a NADPH oxidase activity in a calcium-independent manner. May be involved in endothelial generation of reactive oxygen species (ROS), proliferation and angiogenesis and contribute to endothelial response to thrombin. However another study showed an absence of oxidase activity. Subject to rapid degradation. Functionally, lacks calcium-dependent NADPH oxidase activity. This Homo sapiens (Human) protein is NADPH oxidase 5.